A 54-amino-acid chain; its full sequence is Kazal-type inhibitor-like protein (54 aa).

A Kazal-like domain is found at 1–54 (MKVNCKGYPTKFCFGKPLPHCASDGKTYPNRCRFCNAFVKSHGLITLRYYGKCK). Cystine bridges form between C5/C35, C13/C32, and C21/C53.

As to quaternary structure, may form disulfide-linked dimers or trimers (in vitro). Expressed by the venom gland.

The protein resides in the secreted. Its function is as follows. Partially inhibits trypsin in vitro at slightly acidic pH and concentrations in excess of 0.3 mM. Has no protease inhibitory activity at neutral or basic pH. Has no antibacterial activity. Shows no toxicity in vertebrates apart from transient paw edema in mouse. This is Kazal-type inhibitor-like protein from Bothriechis schlegelii (Eyelash palm pitviper).